A 174-amino-acid polypeptide reads, in one-letter code: Isomerase prhC (174 aa).

The protein belongs to the trt14 isomerase family. Homodimer.

It functions in the pathway secondary metabolite biosynthesis; terpenoid biosynthesis. Functionally, isomerase; part of the gene cluster that mediates the biosynthesis of paraherquonin, a meroterpenoid with a unique, highly congested hexacyclic molecular architecture. The first step of the pathway is the synthesis of 3,5-dimethylorsellinic acid (DMOA) by the polyketide synthase prhL. Synthesis of DMOA is followed by farnesylation by the prenyltransferase prhE, methylesterification by the methyl-transferase prhM, epoxidation of the prenyl chain by the flavin-dependent monooxygenase prhF, and cyclization of the farnesyl moiety by the terpene cyclase prhH, to yield the tetracyclic intermediate, protoaustinoid A. The short chain dehydrogenase prhI then oxidizes the C-3 alcohol group of the terpene cyclase product to transform protoaustinoid A into protoaustinoid B. The FAD-binding monooxygenase prhJ catalyzes the oxidation of protoaustinoid B into preaustinoid A which is further oxidized into preaustinoid A1 by FAD-binding monooxygenase phrK. Finally, prhA leads to berkeleydione via the berkeleyone B intermediate. PrhA is a multifunctional dioxygenase that first desaturates at C5-C6 to form berkeleyone B, followed by rearrangement of the A/B-ring to form the cycloheptadiene moiety in berkeleydione. Berkeleydione serves as the key intermediate for the biosynthesis of paraherquonin as well as many other meroterpenoids. The cytochrome P450 monooxygenases prhB, prhD, and prhN, as well as the isomerase prhC, are probably involved in the late stage of paraherquonin biosynthesis, after the production of berkeleydione. Especially prhC might be a multifunctional enzyme that catalyzes the D-ring expansion via intramolecular methoxy rearrangement, as well as the hydrolysis of the expanded D-ring. This is Isomerase prhC from Penicillium brasilianum.